Reading from the N-terminus, the 166-residue chain is Regulatory protein RecX (166 aa).

The protein belongs to the RecX family.

It is found in the cytoplasm. Its function is as follows. Modulates RecA activity. The polypeptide is Regulatory protein RecX (Salmonella paratyphi A (strain ATCC 9150 / SARB42)).